A 415-amino-acid chain; its full sequence is Lipoyl synthase, mitochondrial (415 aa).

Residues methionine 1–tyrosine 33 constitute a mitochondrion transit peptide. [4Fe-4S] cluster is bound by residues cysteine 132, cysteine 137, cysteine 143, cysteine 163, cysteine 167, cysteine 170, and serine 378. In terms of domain architecture, Radical SAM core spans aspartate 148–leucine 367.

Belongs to the radical SAM superfamily. Lipoyl synthase family. [4Fe-4S] cluster is required as a cofactor.

Its subcellular location is the mitochondrion. It catalyses the reaction [[Fe-S] cluster scaffold protein carrying a second [4Fe-4S](2+) cluster] + N(6)-octanoyl-L-lysyl-[protein] + 2 oxidized [2Fe-2S]-[ferredoxin] + 2 S-adenosyl-L-methionine + 4 H(+) = [[Fe-S] cluster scaffold protein] + N(6)-[(R)-dihydrolipoyl]-L-lysyl-[protein] + 4 Fe(3+) + 2 hydrogen sulfide + 2 5'-deoxyadenosine + 2 L-methionine + 2 reduced [2Fe-2S]-[ferredoxin]. The protein operates within protein modification; protein lipoylation via endogenous pathway; protein N(6)-(lipoyl)lysine from octanoyl-[acyl-carrier-protein]: step 2/2. In terms of biological role, catalyzes the radical-mediated insertion of two sulfur atoms into the C-6 and C-8 positions of the octanoyl moiety bound to the lipoyl domains of lipoate-dependent enzymes, thereby converting the octanoylated domains into lipoylated derivatives. This Aspergillus clavatus (strain ATCC 1007 / CBS 513.65 / DSM 816 / NCTC 3887 / NRRL 1 / QM 1276 / 107) protein is Lipoyl synthase, mitochondrial.